The following is a 159-amino-acid chain: MAPKGSERTVKKVVAENRKARFNYEIVDTYEAGLVLTGTEVKSLREGKANIAESYATDEGGEIWLINSYLPEYLQANRFNHETRRRRKLLLSRREVNRLQGAVNREGMSLIPLRIYFNERGRAKLELALGKGKKLHDKRETSKERDWNRQKNRLLKERG.

The segment at 133-159 (KKLHDKRETSKERDWNRQKNRLLKERG) is disordered. The span at 137–159 (DKRETSKERDWNRQKNRLLKERG) shows a compositional bias: basic and acidic residues.

This sequence belongs to the SmpB family.

It localises to the cytoplasm. In terms of biological role, required for rescue of stalled ribosomes mediated by trans-translation. Binds to transfer-messenger RNA (tmRNA), required for stable association of tmRNA with ribosomes. tmRNA and SmpB together mimic tRNA shape, replacing the anticodon stem-loop with SmpB. tmRNA is encoded by the ssrA gene; the 2 termini fold to resemble tRNA(Ala) and it encodes a 'tag peptide', a short internal open reading frame. During trans-translation Ala-aminoacylated tmRNA acts like a tRNA, entering the A-site of stalled ribosomes, displacing the stalled mRNA. The ribosome then switches to translate the ORF on the tmRNA; the nascent peptide is terminated with the 'tag peptide' encoded by the tmRNA and targeted for degradation. The ribosome is freed to recommence translation, which seems to be the essential function of trans-translation. The chain is SsrA-binding protein from Sinorhizobium medicae (strain WSM419) (Ensifer medicae).